Consider the following 702-residue polypeptide: Arylphorin (702 aa).

The first 16 residues, 1–16, serve as a signal peptide directing secretion; that stretch reads MQTVLFLAALVSLAAA. N-linked (GlcNAc...) asparagine glycosylation is found at Asn-211 and Asn-481.

Belongs to the hemocyanin family. Hemolymph.

The protein resides in the secreted. Functionally, larval storage protein (LSP) which may serve as a store of amino acids for synthesis of adult proteins. Binds the A.niger cell wall component alpha-1,3-glucan, a fungal pathogen-associated molecular pattern (PAMP) that activates the host immune response. This chain is Arylphorin (LOC113516268), found in Galleria mellonella (Greater wax moth).